Reading from the N-terminus, the 31-residue chain is Dermaseptin-7.1TR (31 aa).

Gln-31 is subject to Glutamine amide.

In terms of tissue distribution, expressed by the skin glands.

The protein localises to the secreted. Has antimicrobial activity. The protein is Dermaseptin-7.1TR of Phyllomedusa trinitatis (Trinidad leaf frog).